A 286-amino-acid polypeptide reads, in one-letter code: Formamidopyrimidine-DNA glycosylase (286 aa).

Residue Pro2 is the Schiff-base intermediate with DNA of the active site. Glu3 (proton donor) is an active-site residue. Catalysis depends on Lys60, which acts as the Proton donor; for beta-elimination activity. DNA-binding residues include His103, Arg122, and Arg167. An FPG-type zinc finger spans residues 252–286; that stretch reads WVYRRNQKPCRKCGTLIEKTKVAGRSTHWCPNCQN. Arg276 (proton donor; for delta-elimination activity) is an active-site residue.

It belongs to the FPG family. Monomer. Zn(2+) is required as a cofactor.

It carries out the reaction Hydrolysis of DNA containing ring-opened 7-methylguanine residues, releasing 2,6-diamino-4-hydroxy-5-(N-methyl)formamidopyrimidine.. It catalyses the reaction 2'-deoxyribonucleotide-(2'-deoxyribose 5'-phosphate)-2'-deoxyribonucleotide-DNA = a 3'-end 2'-deoxyribonucleotide-(2,3-dehydro-2,3-deoxyribose 5'-phosphate)-DNA + a 5'-end 5'-phospho-2'-deoxyribonucleoside-DNA + H(+). In terms of biological role, involved in base excision repair of DNA damaged by oxidation or by mutagenic agents. Acts as a DNA glycosylase that recognizes and removes damaged bases. Has a preference for oxidized purines, such as 7,8-dihydro-8-oxoguanine (8-oxoG). Has AP (apurinic/apyrimidinic) lyase activity and introduces nicks in the DNA strand. Cleaves the DNA backbone by beta-delta elimination to generate a single-strand break at the site of the removed base with both 3'- and 5'-phosphates. The sequence is that of Formamidopyrimidine-DNA glycosylase from Prochlorococcus marinus (strain MIT 9211).